Reading from the N-terminus, the 338-residue chain is Serine/threonine-protein kinase YabT (338 aa).

The Protein kinase domain maps to 28-286 (YTLRKQLGKG…PIKASPQPAT (259 aa)). ATP-binding positions include 34-42 (LGKGANGIV) and Lys-55. Catalysis depends on Asp-148, which acts as the Proton acceptor. Positions 266–312 (DAGQKAAQRKQPIKASPQPATRQRQQKPRQGKITKTRYTPKQKPAKS) are disordered. The segment covering 289 to 309 (RQQKPRQGKITKTRYTPKQKP) has biased composition (basic residues).

This sequence belongs to the protein kinase superfamily. Ser/Thr protein kinase family. Autophosphorylated.

The enzyme catalyses L-seryl-[protein] + ATP = O-phospho-L-seryl-[protein] + ADP + H(+). The catalysed reaction is L-threonyl-[protein] + ATP = O-phospho-L-threonyl-[protein] + ADP + H(+). Functionally, plays a role in the cell's commitment to sporulation; phosphorylates DNA replication initiation-control protein YabA. Deletion of this kinase delays entry into sporulation but does not affect final spore yield. Overexpression decreases biofilm formation; phosphorylation of YabA probably prevents biofilm formation. This is Serine/threonine-protein kinase YabT (yabT) from Bacillus subtilis (strain 168).